The chain runs to 189 residues: Large ribosomal subunit protein bL9 (189 aa).

The protein belongs to the bacterial ribosomal protein bL9 family.

Functionally, binds to the 23S rRNA. The polypeptide is Large ribosomal subunit protein bL9 (Methylocella silvestris (strain DSM 15510 / CIP 108128 / LMG 27833 / NCIMB 13906 / BL2)).